A 528-amino-acid chain; its full sequence is Succinate-semialdehyde dehydrogenase, mitochondrial (528 aa).

The transit peptide at 1-34 (MVIGAAARVAIGGCRKLISSHTSLLLVSSQCRQM) directs the protein to the mitochondrion. 196–198 (TPW) is an NAD(+) binding site. Arg-207 contributes to the substrate binding site. NAD(+)-binding positions include 222–225 (KPSE), 275–280 (GSTAVG), and Glu-297. Glu-297 (proton acceptor) is an active-site residue. Arg-325 serves as a coordination point for substrate. Residue Cys-331 is the Nucleophile of the active site. Residues Cys-331 and Cys-333 are joined by a disulfide bond. 428–430 (EIF) lines the NAD(+) pocket. Residue Ser-488 participates in substrate binding.

Belongs to the aldehyde dehydrogenase family. Homotetramer. As to expression, expressed in developing leaf tissues.

Its subcellular location is the mitochondrion matrix. It catalyses the reaction succinate semialdehyde + NAD(+) + H2O = succinate + NADH + 2 H(+). Its pathway is amino-acid degradation; 4-aminobutanoate degradation. Its activity is regulated as follows. Competitive inhibition by NADH. Inhibited by ATP, ADP and AMP. Redox-regulated. Inhibited under oxydizing conditions. Oxidizes specifically succinate semialdehyde. Involved in plant response to environmental stress by preventing the accumulation of reactive oxygen species, probably by regulating proline, gamma-hydroxybutyrate (GHB) and gamma-aminobutyrate (GABA) levels. Required for the maintenance of the shoot apical meristem (SAM) structure and subsequent adaxial-abaxial axis-dependent development of cotyledons and leaves. This is Succinate-semialdehyde dehydrogenase, mitochondrial from Arabidopsis thaliana (Mouse-ear cress).